The sequence spans 365 residues: MDFSEFSLEITNNKNFADWDYVECKYFHKDFAYGRFALSPLTAKESRLLKKGLFEALLTEILCLRFTHAKIQNECVNLMNIVGIQESLDEILKNFGKIILTGKLEEFVGKGPFVAILDVRGPLNAMAVDIELPPGIKVEIETQHIATITEPIPFVVELRIELVSSTSKGETGITDEEGFSIDPNPPIRKVNSSIQGYEYGGQTFERLSIEMLTSLPIIPNEALLLGSMKIMNLFQIVLQAKYLDYKELEKGIHVGVFCVSALRAEQSKWIKTILEDALYMVGGRKHQGPLTDEEDDSIDSNFTPVQNLDCRIESYEEEGQTFQRLFLEIWTKSPTEPQEALWEASAKILELFSLFLQTSKENEKD.

It belongs to the RNA polymerase alpha chain family. As to quaternary structure, in plastids the minimal PEP RNA polymerase catalytic core is composed of four subunits: alpha, beta, beta', and beta''. When a (nuclear-encoded) sigma factor is associated with the core the holoenzyme is formed, which can initiate transcription.

Its subcellular location is the plastid. It is found in the chloroplast. The enzyme catalyses RNA(n) + a ribonucleoside 5'-triphosphate = RNA(n+1) + diphosphate. Functionally, DNA-dependent RNA polymerase catalyzes the transcription of DNA into RNA using the four ribonucleoside triphosphates as substrates. This is Putative DNA-directed RNA polymerase subunit alpha-like 3 (rpoAL3-A) from Pelargonium hortorum (Common geranium).